Reading from the N-terminus, the 349-residue chain is Core protein VP7 (349 aa).

N-linked (GlcNAc...) asparagine; by host glycosylation is present at N287.

Belongs to the orbivirus VP7 family. As to quaternary structure, homotrimer that assemble in a complex of 260 capsomers on an inner scaffold composed of VP3.

The protein localises to the virion. In terms of biological role, the VP7 protein is one of the five proteins (with VP1, VP3, VP4, and VP6) which form the inner capsid of the virus. This Antilocapra americana (Pronghorn) protein is Core protein VP7 (Segment-7).